We begin with the raw amino-acid sequence, 187 residues long: Threonylcarbamoyl-AMP synthase (187 aa).

The YrdC-like domain occupies 4–187 (TPDLDAAVAT…DARTGQILRD (184 aa)).

This sequence belongs to the SUA5 family. TsaC subfamily.

The protein localises to the cytoplasm. It carries out the reaction L-threonine + hydrogencarbonate + ATP = L-threonylcarbamoyladenylate + diphosphate + H2O. Functionally, required for the formation of a threonylcarbamoyl group on adenosine at position 37 (t(6)A37) in tRNAs that read codons beginning with adenine. Catalyzes the conversion of L-threonine, HCO(3)(-)/CO(2) and ATP to give threonylcarbamoyl-AMP (TC-AMP) as the acyladenylate intermediate, with the release of diphosphate. This chain is Threonylcarbamoyl-AMP synthase, found in Xanthomonas campestris pv. campestris (strain 8004).